The chain runs to 497 residues: Serine hydroxymethyltransferase (497 aa).

Residues leucine 176 and 180–182 (GHL) each bind (6S)-5,6,7,8-tetrahydrofolate. Lysine 289 is subject to N6-(pyridoxal phosphate)lysine. Residue glutamate 306 participates in (6S)-5,6,7,8-tetrahydrofolate binding.

This sequence belongs to the SHMT family. In terms of assembly, homodimer. Requires pyridoxal 5'-phosphate as cofactor.

Its subcellular location is the cytoplasm. It catalyses the reaction (6R)-5,10-methylene-5,6,7,8-tetrahydrofolate + glycine + H2O = (6S)-5,6,7,8-tetrahydrofolate + L-serine. Its pathway is one-carbon metabolism; tetrahydrofolate interconversion. It participates in amino-acid biosynthesis; glycine biosynthesis; glycine from L-serine: step 1/1. Functionally, catalyzes the reversible interconversion of serine and glycine with tetrahydrofolate (THF) serving as the one-carbon carrier. This reaction serves as the major source of one-carbon groups required for the biosynthesis of purines, thymidylate, methionine, and other important biomolecules. Also exhibits THF-independent aldolase activity toward beta-hydroxyamino acids, producing glycine and aldehydes, via a retro-aldol mechanism. In Chlamydia pneumoniae (Chlamydophila pneumoniae), this protein is Serine hydroxymethyltransferase.